The sequence spans 317 residues: L-lactate dehydrogenase (317 aa).

Residues valine 17, aspartate 38, lysine 43, tyrosine 69, and 83 to 84 (GA) contribute to the NAD(+) site. Substrate contacts are provided by glutamine 86 and arginine 92. Residues serine 105, 122–124 (ATN), and serine 147 each bind NAD(+). 124–127 (NPVD) contributes to the substrate binding site. 152-155 (DTAR) provides a ligand contact to substrate. Beta-D-fructose 1,6-bisphosphate is bound by residues arginine 157 and histidine 172. The active-site Proton acceptor is histidine 179. Tyrosine 224 carries the phosphotyrosine modification. Threonine 233 serves as a coordination point for substrate.

It belongs to the LDH/MDH superfamily. LDH family. Homotetramer.

Its subcellular location is the cytoplasm. It catalyses the reaction (S)-lactate + NAD(+) = pyruvate + NADH + H(+). It functions in the pathway fermentation; pyruvate fermentation to lactate; (S)-lactate from pyruvate: step 1/1. Its activity is regulated as follows. Allosterically activated by fructose 1,6-bisphosphate (FBP). Functionally, catalyzes the conversion of lactate to pyruvate. The polypeptide is L-lactate dehydrogenase (Geobacillus kaustophilus (strain HTA426)).